The following is a 164-amino-acid chain: 6,7-dimethyl-8-ribityllumazine synthase (164 aa).

Residues F24, 58–60, and 82–84 contribute to the 5-amino-6-(D-ribitylamino)uracil site; these read ALE and AVI. Residue 87–88 participates in (2S)-2-hydroxy-3-oxobutyl phosphate binding; it reads ET. The Proton donor role is filled by H90. N115 is a binding site for 5-amino-6-(D-ribitylamino)uracil. R129 serves as a coordination point for (2S)-2-hydroxy-3-oxobutyl phosphate.

It belongs to the DMRL synthase family.

The catalysed reaction is (2S)-2-hydroxy-3-oxobutyl phosphate + 5-amino-6-(D-ribitylamino)uracil = 6,7-dimethyl-8-(1-D-ribityl)lumazine + phosphate + 2 H2O + H(+). It functions in the pathway cofactor biosynthesis; riboflavin biosynthesis; riboflavin from 2-hydroxy-3-oxobutyl phosphate and 5-amino-6-(D-ribitylamino)uracil: step 1/2. In terms of biological role, catalyzes the formation of 6,7-dimethyl-8-ribityllumazine by condensation of 5-amino-6-(D-ribitylamino)uracil with 3,4-dihydroxy-2-butanone 4-phosphate. This is the penultimate step in the biosynthesis of riboflavin. The protein is 6,7-dimethyl-8-ribityllumazine synthase of Ralstonia nicotianae (strain ATCC BAA-1114 / GMI1000) (Ralstonia solanacearum).